A 345-amino-acid chain; its full sequence is Inositol phosphoceramide mannosyltransferase 2 (345 aa).

A helical transmembrane segment spans residues 4–24 (VIYKFAVFAAVNFFLMSSIVL). An N-linked (GlcNAc...) asparagine glycan is attached at Asn55. A helical membrane pass occupies residues 220–240 (YWLPYLTIMLSTGPLSISFLW). Asn269 is a glycosylation site (N-linked (GlcNAc...) asparagine). Residues 296–316 (LAYVIVAGFCLYFILSYMFFS) traverse the membrane as a helical segment.

Belongs to the glycosyltransferase 32 family.

It localises to the golgi apparatus. Its subcellular location is the cis-Golgi network membrane. The protein localises to the trans-Golgi network membrane. Functionally, with imt1 and imt3, is required for the synthesis of mannosyl phosphorylinositol ceramide (MIPC). Catalyzes the addition of mannosyl to phosphorylinositol ceramide (IPC). MIPC is essential for cell morphology, cell-surface distribution of ergosterol, localization for plasma-membrane transporters, and lipid-raft-mediated endocytosis of plasma membrane proteins to the vacuole. This is Inositol phosphoceramide mannosyltransferase 2 from Schizosaccharomyces pombe (strain 972 / ATCC 24843) (Fission yeast).